A 341-amino-acid polypeptide reads, in one-letter code: Holliday junction branch migration complex subunit RuvB (341 aa).

The interval Met1–Tyr180 is large ATPase domain (RuvB-L). Leu19, Arg20, Gly61, Lys64, Thr65, Thr66, Arg170, Tyr180, and Arg217 together coordinate ATP. Mg(2+) is bound at residue Thr65. The interval Asn181–Gly251 is small ATPAse domain (RuvB-S). Positions Asp254 to Phe341 are head domain (RuvB-H). Residues Arg309 and Arg314 each contribute to the DNA site.

Belongs to the RuvB family. In terms of assembly, homohexamer. Forms an RuvA(8)-RuvB(12)-Holliday junction (HJ) complex. HJ DNA is sandwiched between 2 RuvA tetramers; dsDNA enters through RuvA and exits via RuvB. An RuvB hexamer assembles on each DNA strand where it exits the tetramer. Each RuvB hexamer is contacted by two RuvA subunits (via domain III) on 2 adjacent RuvB subunits; this complex drives branch migration. In the full resolvosome a probable DNA-RuvA(4)-RuvB(12)-RuvC(2) complex forms which resolves the HJ.

The protein localises to the cytoplasm. It catalyses the reaction ATP + H2O = ADP + phosphate + H(+). The RuvA-RuvB-RuvC complex processes Holliday junction (HJ) DNA during genetic recombination and DNA repair, while the RuvA-RuvB complex plays an important role in the rescue of blocked DNA replication forks via replication fork reversal (RFR). RuvA specifically binds to HJ cruciform DNA, conferring on it an open structure. The RuvB hexamer acts as an ATP-dependent pump, pulling dsDNA into and through the RuvAB complex. RuvB forms 2 homohexamers on either side of HJ DNA bound by 1 or 2 RuvA tetramers; 4 subunits per hexamer contact DNA at a time. Coordinated motions by a converter formed by DNA-disengaged RuvB subunits stimulates ATP hydrolysis and nucleotide exchange. Immobilization of the converter enables RuvB to convert the ATP-contained energy into a lever motion, pulling 2 nucleotides of DNA out of the RuvA tetramer per ATP hydrolyzed, thus driving DNA branch migration. The RuvB motors rotate together with the DNA substrate, which together with the progressing nucleotide cycle form the mechanistic basis for DNA recombination by continuous HJ branch migration. Branch migration allows RuvC to scan DNA until it finds its consensus sequence, where it cleaves and resolves cruciform DNA. The protein is Holliday junction branch migration complex subunit RuvB of Leptospira borgpetersenii serovar Hardjo-bovis (strain JB197).